We begin with the raw amino-acid sequence, 353 residues long: Photosystem II D2 protein (353 aa).

Position 2 is an N-acetylthreonine (T2). Phosphothreonine is present on T2. Residues 41 to 61 (CAYFALGGWFTGTTFVTSWYT) form a helical membrane-spanning segment. H118 contributes to the chlorophyll a binding site. A helical transmembrane segment spans residues 125 to 141 (GFMLRQFELARSVQLRP). Residues Q130 and N143 each coordinate pheophytin a. Residues 153–166 (VFVSVFLIYPLGQS) traverse the membrane as a helical segment. Chlorophyll a is bound at residue H198. The helical transmembrane segment at 208–228 (AALLCAIHGATVENTLFEDGD) threads the bilayer. Positions 215 and 262 each coordinate a plastoquinone. H215 serves as a coordination point for Fe cation. H269 provides a ligand contact to Fe cation. The helical transmembrane segment at 279 to 295 (GLWMSAIGVVGLALNLR) threads the bilayer.

This sequence belongs to the reaction center PufL/M/PsbA/D family. PSII is composed of 1 copy each of membrane proteins PsbA, PsbB, PsbC, PsbD, PsbE, PsbF, PsbH, PsbI, PsbJ, PsbK, PsbL, PsbM, PsbT, PsbX, PsbY, PsbZ, Psb30/Ycf12, at least 3 peripheral proteins of the oxygen-evolving complex and a large number of cofactors. It forms dimeric complexes. The D1/D2 heterodimer binds P680, chlorophylls that are the primary electron donor of PSII, and subsequent electron acceptors. It shares a non-heme iron and each subunit binds pheophytin, quinone, additional chlorophylls, carotenoids and lipids. There is also a Cl(-1) ion associated with D1 and D2, which is required for oxygen evolution. The PSII complex binds additional chlorophylls, carotenoids and specific lipids. is required as a cofactor.

The protein resides in the plastid. Its subcellular location is the chloroplast thylakoid membrane. The catalysed reaction is 2 a plastoquinone + 4 hnu + 2 H2O = 2 a plastoquinol + O2. Photosystem II (PSII) is a light-driven water:plastoquinone oxidoreductase that uses light energy to abstract electrons from H(2)O, generating O(2) and a proton gradient subsequently used for ATP formation. It consists of a core antenna complex that captures photons, and an electron transfer chain that converts photonic excitation into a charge separation. The D1/D2 (PsbA/PsbD) reaction center heterodimer binds P680, the primary electron donor of PSII as well as several subsequent electron acceptors. D2 is needed for assembly of a stable PSII complex. The protein is Photosystem II D2 protein of Cryptomeria japonica (Japanese cedar).